We begin with the raw amino-acid sequence, 199 residues long: 3-isopropylmalate dehydratase small subunit (199 aa).

It belongs to the LeuD family. LeuD type 1 subfamily. Heterodimer of LeuC and LeuD.

It carries out the reaction (2R,3S)-3-isopropylmalate = (2S)-2-isopropylmalate. Its pathway is amino-acid biosynthesis; L-leucine biosynthesis; L-leucine from 3-methyl-2-oxobutanoate: step 2/4. Catalyzes the isomerization between 2-isopropylmalate and 3-isopropylmalate, via the formation of 2-isopropylmaleate. In Bacillus pumilus (strain SAFR-032), this protein is 3-isopropylmalate dehydratase small subunit.